A 361-amino-acid polypeptide reads, in one-letter code: dTDP-glucose 4,6-dehydratase (361 aa).

NAD(+)-binding positions include 11 to 12 (FI), 32 to 35 (DKLT), 58 to 59 (DI), 80 to 84 (LAAES), and threonine 99. Serine 84 serves as a coordination point for substrate. Threonine 133 serves as a coordination point for substrate. Aspartate 134 serves as the catalytic Proton donor. Catalysis depends on proton acceptor residues glutamate 135 and tyrosine 167. 167–171 (YSASK) contacts NAD(+). Asparagine 196 is a substrate binding site. Position 197 (asparagine 197) interacts with NAD(+). Substrate is bound by residues 206–207 (KL), 222–224 (PIY), arginine 231, asparagine 266, 296–300 (DRPGH), and tyrosine 357.

The protein belongs to the NAD(P)-dependent epimerase/dehydratase family. dTDP-glucose dehydratase subfamily. Homodimer. It depends on NAD(+) as a cofactor.

The enzyme catalyses dTDP-alpha-D-glucose = dTDP-4-dehydro-6-deoxy-alpha-D-glucose + H2O. It functions in the pathway carbohydrate biosynthesis; dTDP-L-rhamnose biosynthesis. The protein operates within bacterial outer membrane biogenesis; LPS O-antigen biosynthesis. Catalyzes the dehydration of dTDP-D-glucose to form dTDP-6-deoxy-D-xylo-4-hexulose via a three-step process involving oxidation, dehydration and reduction. This chain is dTDP-glucose 4,6-dehydratase, found in Salmonella typhimurium (strain LT2 / SGSC1412 / ATCC 700720).